The following is a 603-amino-acid chain: Replication protein A 70 kDa DNA-binding subunit (603 aa).

The segment at P131–N152 is disordered. Phosphoserine is present on S160. The segment at residues W179 to S252 is a DNA-binding region (OB). At S420 the chain carries Phosphoserine. Residues C464 to C486 form a C4-type zinc finger.

The protein belongs to the replication factor A protein 1 family. Component of the heterotrimeric canonical replication protein A complex (RPA).

Its subcellular location is the nucleus. As part of the heterotrimeric replication protein A complex (RPA/RP-A), binds and stabilizes single-stranded DNA intermediates, that form during DNA replication or upon DNA stress. It prevents their reannealing and in parallel, recruits and activates different proteins and complexes involved in DNA metabolism. Thereby, it plays an essential role both in DNA replication and the cellular response to DNA damage. The sequence is that of Replication protein A 70 kDa DNA-binding subunit from Drosophila melanogaster (Fruit fly).